The sequence spans 106 residues: Large ribosomal subunit protein eL30 (106 aa).

Belongs to the eukaryotic ribosomal protein eL30 family.

This is Large ribosomal subunit protein eL30 (rpl30e) from Sulfurisphaera tokodaii (strain DSM 16993 / JCM 10545 / NBRC 100140 / 7) (Sulfolobus tokodaii).